Reading from the N-terminus, the 500-residue chain is L-arabinose isomerase (500 aa).

4 residues coordinate Mn(2+): E306, E333, H350, and H450.

The protein belongs to the arabinose isomerase family. As to quaternary structure, homohexamer. It depends on Mn(2+) as a cofactor.

It carries out the reaction beta-L-arabinopyranose = L-ribulose. It functions in the pathway carbohydrate degradation; L-arabinose degradation via L-ribulose; D-xylulose 5-phosphate from L-arabinose (bacterial route): step 1/3. In terms of biological role, catalyzes the conversion of L-arabinose to L-ribulose. This Escherichia coli O17:K52:H18 (strain UMN026 / ExPEC) protein is L-arabinose isomerase.